A 360-amino-acid chain; its full sequence is Alanine racemase (360 aa).

Catalysis depends on Lys-33, which acts as the Proton acceptor; specific for D-alanine. Lys-33 carries the post-translational modification N6-(pyridoxal phosphate)lysine. Residue Arg-129 coordinates substrate. The active-site Proton acceptor; specific for L-alanine is the Tyr-253. Met-301 serves as a coordination point for substrate.

This sequence belongs to the alanine racemase family. It depends on pyridoxal 5'-phosphate as a cofactor.

It catalyses the reaction L-alanine = D-alanine. The protein operates within amino-acid biosynthesis; D-alanine biosynthesis; D-alanine from L-alanine: step 1/1. Functionally, catalyzes the interconversion of L-alanine and D-alanine. May also act on other amino acids. This is Alanine racemase (alr) from Xanthomonas campestris pv. campestris (strain 8004).